The sequence spans 549 residues: Pyrophosphate--fructose 6-phosphate 1-phosphotransferase (549 aa).

Residue G78 coordinates diphosphate. Residue D172 participates in Mg(2+) binding. Substrate is bound by residues 200–202 (TID), 239–240 (KY), 247–249 (MGR), E308, and 421–424 (YEGR). D202 (proton acceptor) is an active-site residue.

This sequence belongs to the phosphofructokinase type A (PFKA) family. PPi-dependent PFK group II subfamily. Clade 'Long' sub-subfamily. As to quaternary structure, homodimer. Requires Mg(2+) as cofactor.

The protein resides in the cytoplasm. The enzyme catalyses beta-D-fructose 6-phosphate + diphosphate = beta-D-fructose 1,6-bisphosphate + phosphate + H(+). It participates in carbohydrate degradation; glycolysis; D-glyceraldehyde 3-phosphate and glycerone phosphate from D-glucose: step 3/4. Its activity is regulated as follows. Non-allosteric. In terms of biological role, catalyzes the phosphorylation of D-fructose 6-phosphate, the first committing step of glycolysis. Uses inorganic phosphate (PPi) as phosphoryl donor instead of ATP like common ATP-dependent phosphofructokinases (ATP-PFKs), which renders the reaction reversible, and can thus function both in glycolysis and gluconeogenesis. Consistently, PPi-PFK can replace the enzymes of both the forward (ATP-PFK) and reverse (fructose-bisphosphatase (FBPase)) reactions. The protein is Pyrophosphate--fructose 6-phosphate 1-phosphotransferase of Porphyromonas gingivalis (Bacteroides gingivalis).